The chain runs to 451 residues: Protein SAR DEFICIENT 1 (451 aa).

Residues 149–270 (DKWTSDEFES…AFHKKLSSRH (122 aa)) form a DNA-binding region.

It belongs to the plant ACBP60 protein family. (Microbial infection) Interacts with V.dahliae SCP41.

The protein localises to the nucleus. Its function is as follows. Transcription activator that binds DNA in a sequence-specific manner, 5'-GAAATTTTGG-3', to promote the expression of target genes. Recruited to the promoter of ICS1 and other defense-related genes (e.g. PR1 and SID2) in response to both biotic (e.g. Pseudomonas syringae pv. maculicola ES4326) and abiotic stresses (e.g. UV-B), thus triggering slow defense responses by stimulating salicylic acid (SA) biosynthesis. Required for basal and systemic acquired resistance to P.syringae pv. maculicola and Hyaloperonospora arabidopsidis. The polypeptide is Protein SAR DEFICIENT 1 (Arabidopsis thaliana (Mouse-ear cress)).